The primary structure comprises 458 residues: UDP-N-acetylglucosamine 1-carboxyvinyltransferase (458 aa).

34-35 (KN) lines the phosphoenolpyruvate pocket. Residue R104 coordinates UDP-N-acetyl-alpha-D-glucosamine. The active-site Proton donor is the C128. C128 carries the 2-(S-cysteinyl)pyruvic acid O-phosphothioketal modification. D320 and V342 together coordinate UDP-N-acetyl-alpha-D-glucosamine.

It belongs to the EPSP synthase family. MurA subfamily.

The protein resides in the cytoplasm. The catalysed reaction is phosphoenolpyruvate + UDP-N-acetyl-alpha-D-glucosamine = UDP-N-acetyl-3-O-(1-carboxyvinyl)-alpha-D-glucosamine + phosphate. Its pathway is cell wall biogenesis; peptidoglycan biosynthesis. In terms of biological role, cell wall formation. Adds enolpyruvyl to UDP-N-acetylglucosamine. The polypeptide is UDP-N-acetylglucosamine 1-carboxyvinyltransferase (Prochlorococcus marinus (strain NATL2A)).